A 297-amino-acid chain; its full sequence is D-alanine--D-alanine ligase (297 aa).

One can recognise an ATP-grasp domain in the interval lysine 95 to glutamate 294. Residue valine 125–threonine 180 participates in ATP binding. Mg(2+) contacts are provided by aspartate 248, glutamate 261, and asparagine 263.

It belongs to the D-alanine--D-alanine ligase family. It depends on Mg(2+) as a cofactor. Mn(2+) is required as a cofactor.

The protein localises to the cytoplasm. It catalyses the reaction 2 D-alanine + ATP = D-alanyl-D-alanine + ADP + phosphate + H(+). It functions in the pathway cell wall biogenesis; peptidoglycan biosynthesis. Its function is as follows. Cell wall formation. The chain is D-alanine--D-alanine ligase from Haemophilus influenzae (strain PittEE).